The chain runs to 161 residues: Regulator of ribonuclease activity A (161 aa).

It belongs to the RraA family. As to quaternary structure, homotrimer. Binds to both RNA-binding sites in the C-terminal region of Rne and to RhlB.

Its subcellular location is the cytoplasm. Globally modulates RNA abundance by binding to RNase E (Rne) and regulating its endonucleolytic activity. Can modulate Rne action in a substrate-dependent manner by altering the composition of the degradosome. Modulates RNA-binding and helicase activities of the degradosome. This is Regulator of ribonuclease activity A from Salmonella choleraesuis (strain SC-B67).